Consider the following 375-residue polypeptide: Protein kinase MCK1 (375 aa).

Ser-2 is modified (N-acetylserine). The Protein kinase domain occupies Val-35 to Phe-327. ATP is bound by residues Ile-41–Val-49 and Lys-68. Asp-164 serves as the catalytic Proton acceptor. Ser-198 bears the Phosphoserine mark. At Tyr-199 the chain carries Phosphotyrosine. Position 202 is a phosphoserine (Ser-202).

Belongs to the protein kinase superfamily. Ser/Thr protein kinase family. In terms of processing, phosphorylated at tyrosine and serine.

It carries out the reaction L-seryl-[protein] + ATP = O-phospho-L-seryl-[protein] + ADP + H(+). The enzyme catalyses L-threonyl-[protein] + ATP = O-phospho-L-threonyl-[protein] + ADP + H(+). The catalysed reaction is L-tyrosyl-[protein] + ATP = O-phospho-L-tyrosyl-[protein] + ADP + H(+). Its function is as follows. May be an autophosphorylating tyrosine kinase, a bifunctional (serine/tyrosine-specific) protein kinase, or a serine kinase that is a substrate for an associated tyrosine kinase. MCK1 is a transcriptional activator of IME1, it stimulates spore maturation, and play a positive regulatory role in both mitotic centromere function and activation of early meiotic gene expression. This chain is Protein kinase MCK1 (MCK1), found in Saccharomyces cerevisiae (strain ATCC 204508 / S288c) (Baker's yeast).